The chain runs to 427 residues: Phosphomethylpyrimidine synthase (427 aa).

Residues N66, M95, Y124, H163, 185–187, 226–229, and E265 each bind substrate; these read SRG and DGLR. Residue H269 coordinates Zn(2+). Y292 contacts substrate. H333 is a binding site for Zn(2+). C409, C412, and C416 together coordinate [4Fe-4S] cluster.

This sequence belongs to the ThiC family. In terms of assembly, homodimer. It depends on [4Fe-4S] cluster as a cofactor.

The catalysed reaction is 5-amino-1-(5-phospho-beta-D-ribosyl)imidazole + S-adenosyl-L-methionine = 4-amino-2-methyl-5-(phosphooxymethyl)pyrimidine + CO + 5'-deoxyadenosine + formate + L-methionine + 3 H(+). It participates in cofactor biosynthesis; thiamine diphosphate biosynthesis. Its function is as follows. Catalyzes the synthesis of the hydroxymethylpyrimidine phosphate (HMP-P) moiety of thiamine from aminoimidazole ribotide (AIR) in a radical S-adenosyl-L-methionine (SAM)-dependent reaction. The chain is Phosphomethylpyrimidine synthase from Syntrophus aciditrophicus (strain SB).